Reading from the N-terminus, the 626-residue chain is ATP-dependent RNA helicase cyt-19, mitochondrial (626 aa).

Residues alanine 74–serine 103 carry the Q motif motif. The Helicase ATP-binding domain occupies isoleucine 106 to glutamate 297. Alanine 119 to threonine 126 lines the ATP pocket. The short motif at aspartate 241 to aspartate 244 is the DEAD box element. The 165-residue stretch at alanine 329–glycine 493 folds into the Helicase C-terminal domain. The disordered stretch occupies residues leucine 569 to phenylalanine 626. The interval methionine 578–phenylalanine 626 is RNA-binding. A compositionally biased stretch (basic and acidic residues) spans alanine 607–arginine 617.

It belongs to the DEAD box helicase family.

It is found in the mitochondrion matrix. The enzyme catalyses ATP + H2O = ADP + phosphate + H(+). Its activity is regulated as follows. Activated by exposed helices in a group I intron RNA. In terms of biological role, acts as an RNA chaperone to resolve non-native structures formed during RNA folding to promote mitochondrial group I, but also group II, intron splicing. Functions predominantly by disrupting accessible RNA secondary structure and depends on spontaneous openings in tightly packed RNAs to gain access to RNA helices. The protein is ATP-dependent RNA helicase cyt-19, mitochondrial of Neurospora crassa (strain ATCC 24698 / 74-OR23-1A / CBS 708.71 / DSM 1257 / FGSC 987).